Consider the following 277-residue polypeptide: F420-dependent methylenetetrahydromethanopterin dehydrogenase (277 aa).

The protein belongs to the MTD family.

The catalysed reaction is 5,10-methylenetetrahydromethanopterin + oxidized coenzyme F420-(gamma-L-Glu)(n) + 2 H(+) = 5,10-methenyl-5,6,7,8-tetrahydromethanopterin + reduced coenzyme F420-(gamma-L-Glu)(n). It participates in one-carbon metabolism; methanogenesis from CO(2); 5,10-methylene-5,6,7,8-tetrahydromethanopterin from 5,10-methenyl-5,6,7,8-tetrahydromethanopterin (coenzyme F420 route): step 1/1. Catalyzes the reversible reduction of methenyl-H(4)MPT(+) to methylene-H(4)MPT. This is F420-dependent methylenetetrahydromethanopterin dehydrogenase from Methanococcus maripaludis (strain C7 / ATCC BAA-1331).